The chain runs to 326 residues: RNA/RNP complex-1-interacting phosphatase (326 aa).

Residues 1–28 form a disordered region; it reads MNQWHYGRYSRGRDFTARAPPKKKGKNQ. Residues 59-206 form the Tyrosine-protein phosphatase domain; the sequence is FEAKLMPEEC…LQKRRVRKNQ (148 aa). Catalysis depends on cysteine 150, which acts as the Phosphocysteine intermediate. Residue 151-156 participates in substrate binding; the sequence is THGLNR. The Proton donor/acceptor role is filled by arginine 156. Positions 200–258 are disordered; that stretch reads RRVRKNQNASASRSGGLEDSAHLTEQVHTTNKPVNKGPKKSRRGGHLESSQHVQTQSSA. Polar residues predominate over residues 247–258; it reads ESSQHVQTQSSA.

This sequence belongs to the protein-tyrosine phosphatase family. Non-receptor class dual specificity subfamily. In terms of assembly, monomer. May interact with SFRS7 and SFRS9/SRP30C.

The protein localises to the nucleus. The protein resides in the nucleus speckle. Possesses RNA 5'-triphosphatase and diphosphatase activities, but displays a poor protein-tyrosine phosphatase activity. In addition, has phosphatase activity with ATP, ADP and O-methylfluorescein phosphate (in vitro). Binds to RNA. May participate in nuclear mRNA metabolism. This chain is RNA/RNP complex-1-interacting phosphatase (Dusp11), found in Rattus norvegicus (Rat).